Here is an 875-residue protein sequence, read N- to C-terminus: F-box only protein 41 (875 aa).

3 disordered regions span residues E85 to H110, S165 to A194, and S347 to S542. Residues T170 to G182 show a composition bias toward pro residues. A compositionally biased stretch (low complexity) spans P183–A194. A coiled-coil region spans residues A209–G351. Residues S347–A356 are compositionally biased toward polar residues. The segment covering G359–G368 has biased composition (gly residues). The residue at position 360 (R360) is an Omega-N-methylarginine. The segment covering H395–C416 has biased composition (polar residues). S478 carries the phosphoserine modification. T479 is modified (phosphothreonine). An F-box domain is found at S496–S540. Residue S762 is modified to Phosphoserine.

In terms of assembly, directly interacts with SKP1 and CUL1.

Substrate-recognition component of the SCF (SKP1-CUL1-F-box protein)-type E3 ubiquitin ligase complex. This Homo sapiens (Human) protein is F-box only protein 41 (FBXO41).